A 188-amino-acid polypeptide reads, in one-letter code: Probable nicotinate-nucleotide adenylyltransferase (188 aa).

The protein belongs to the NadD family.

It catalyses the reaction nicotinate beta-D-ribonucleotide + ATP + H(+) = deamido-NAD(+) + diphosphate. The protein operates within cofactor biosynthesis; NAD(+) biosynthesis; deamido-NAD(+) from nicotinate D-ribonucleotide: step 1/1. Functionally, catalyzes the reversible adenylation of nicotinate mononucleotide (NaMN) to nicotinic acid adenine dinucleotide (NaAD). In Sulfurovum sp. (strain NBC37-1), this protein is Probable nicotinate-nucleotide adenylyltransferase.